A 207-amino-acid polypeptide reads, in one-letter code: Superoxide dismutase [Mn] (207 aa).

Mn(2+) contacts are provided by histidine 27, histidine 82, aspartate 169, and histidine 173.

It belongs to the iron/manganese superoxide dismutase family. Mn(2+) is required as a cofactor.

It catalyses the reaction 2 superoxide + 2 H(+) = H2O2 + O2. Functionally, destroys superoxide anion radicals which are normally produced within the cells and which are toxic to biological systems. In Yersinia enterocolitica, this protein is Superoxide dismutase [Mn] (sodA).